We begin with the raw amino-acid sequence, 353 residues long: Cyclin-dependent kinase-like 1 (353 aa).

Residues 4-286 enclose the Protein kinase domain; that stretch reads YDRLSKLGEG…CSELMLHGIF (283 aa). ATP is bound by residues 10–18 and lysine 33; that span reads LGEGSYGVV. The active-site Proton acceptor is the aspartate 126. The disordered stretch occupies residues 331–353; the sequence is GGNHGNNNNNGNGINRNFLPTIS. Over residues 335–347 the composition is skewed to low complexity; that stretch reads GNNNNNGNGINRN.

This sequence belongs to the protein kinase superfamily. Ser/Thr protein kinase family. Specifically expressed in head and tail ciliated sensory neurons.

It localises to the cell projection. The protein localises to the cilium. The enzyme catalyses L-seryl-[protein] + ATP = O-phospho-L-seryl-[protein] + ADP + H(+). It carries out the reaction L-threonyl-[protein] + ATP = O-phospho-L-threonyl-[protein] + ADP + H(+). In terms of biological role, modulates cilium assembly. The protein is Cyclin-dependent kinase-like 1 of Caenorhabditis elegans.